The sequence spans 175 residues: Peptide deformylase (175 aa).

Residues cysteine 96 and histidine 138 each contribute to the Fe cation site. The active site involves glutamate 139. A Fe cation-binding site is contributed by histidine 142.

Belongs to the polypeptide deformylase family. Fe(2+) is required as a cofactor.

It carries out the reaction N-terminal N-formyl-L-methionyl-[peptide] + H2O = N-terminal L-methionyl-[peptide] + formate. Removes the formyl group from the N-terminal Met of newly synthesized proteins. Requires at least a dipeptide for an efficient rate of reaction. N-terminal L-methionine is a prerequisite for activity but the enzyme has broad specificity at other positions. This chain is Peptide deformylase, found in Helicobacter acinonychis (strain Sheeba).